A 464-amino-acid chain; its full sequence is MMIEIGTTKYVIYAKVIVDGYVEKHDIIGAIFGQTEGLLGSDLDLRDLQKSGRIGRIDVELENINGKSYAKLIFPSSLDRVETAIIAATIETLDRVGPCIATIKVLNIEDIRIKKRQYITDRAKELLKSIVDTTIDTYEIAEEIKEFVRSEEIIEMGNEKLPSGPNVEDSDTIIIVEGRADVLNLLRCGIKNAIAVGGTSIPESIIELSKKKTTTIFTDGDRGGELILKEAIQTCDIDYVARAPKGREVEELTKKEVVKYLRSKIPIEQYIQFHSNKCNELLKKSKEYRSNTINNNNDSGKISIDSIISENATNDIGELPVSKTSKNERNNTKVIDENIEKNNQNIKEDNNIEIKQSDISEILKKDCSEQWEYIESLLNDISNTDNIKIITNDNIIKTIHYSELDKIDKSDIQMVMSDMPITQKITDLFHECSPIIIGRDINITKKPAKLKVFSHDMLKNMVCL.

In terms of domain architecture, Toprim spans 171-245 (DTIIIVEGRA…DIDYVARAPK (75 aa)). Positions 177, 219, and 221 each coordinate Mg(2+).

It belongs to the archaeal DnaG primase family. In terms of assembly, forms a ternary complex with MCM helicase and DNA. Requires Mg(2+) as cofactor.

The catalysed reaction is ssDNA + n NTP = ssDNA/pppN(pN)n-1 hybrid + (n-1) diphosphate.. RNA polymerase that catalyzes the synthesis of short RNA molecules used as primers for DNA polymerase during DNA replication. This is DNA primase DnaG from Methanococcus aeolicus (strain ATCC BAA-1280 / DSM 17508 / OCM 812 / Nankai-3).